Reading from the N-terminus, the 911-residue chain is MFAPLLKKLFGSKNEREVKRMLKTVNIVNAFEEKMVALSDEQLRAKTAEFKERLAKGETLDQLLPEAFAVAREAGKRVMGMRHFDVQLIGGMTLHEGMIAEMRTGEGKTLVGTLAVYLNALSGKGVHVVTVNDYLARRDANWMRPLYEFLGLSVGIVSAFQPPEEKRAAYASDITYGTNNEFGFDYLRDNMAFSLEEKFQRELNFAVIDEVDSILIDEARTPLIISGQAEDSSKLYIEINRLIPRLTQHIEEVEGQVTQEGHFTIDEKSRQVELNEAGHQFIEEMLTQSGLLAEGESLYSSHNLGLLTHVYAGLRAHKLFHRNVEYIVQDGQVLLIDEHTGRTMPGRRLSEGLHQAIEAKENLNIQAESQTLASTTFQNYFRLYTKLSGMTGTADTEAFEFQSIYGLNVMVIPPNKPLARKDFNDLVYLTADEKYAAIIADIKESMTQGRPVLVGTATIETSEHMSNLLKQEGIEHKVLNAKYHEKEAEIIAQAGAPGALTIATNMAGRGTDILLGGNWEAEVAALENPSPEQIAQIKADWQKRHQQVIESGGLHVIASERHESRRIDNQLRGRSGRQGDPGSSRFYLSLEDSLMRIFASDRVKNFMKALGMQSGEAIEHRMVTNAIEKAQRKVEGRNFDIRKQLLEYDDVANEQRKVIYHMRNSLLAAENIGDTIAEFRQEVLDATINQHIPPQSLPEQWDVAGLEASLASDFAIKLPIQQWLDEDDHLYEETLREKLLKEITDAYNEKEDQAGIDALRTFEKQILLRVLDDLWKDHLSTMDHLRHGIHLRGYAQKNPKQEYKRESFTLFQELLESIKRDTIRVLSHVQVRREDPVEEEARLRREAEELASRMQFQHAPAPGLESEQLSEEGAEVAVAVAPVRNDQKLGRNEPCWCGSGKKFKHCHGQIE.

Residues Gln-87, 105–109, and Asp-512 each bind ATP; that span reads GEGKT. Over residues 561–571 the composition is skewed to basic and acidic residues; that stretch reads RHESRRIDNQL. Residues 561–583 are disordered; the sequence is RHESRRIDNQLRGRSGRQGDPGS. Positions 895, 897, 906, and 907 each coordinate Zn(2+).

It belongs to the SecA family. In terms of assembly, monomer and homodimer. Part of the essential Sec protein translocation apparatus which comprises SecA, SecYEG and auxiliary proteins SecDF-YajC and YidC. It depends on Zn(2+) as a cofactor.

Its subcellular location is the cell inner membrane. It localises to the cytoplasm. The enzyme catalyses ATP + H2O + cellular proteinSide 1 = ADP + phosphate + cellular proteinSide 2.. Its function is as follows. Part of the Sec protein translocase complex. Interacts with the SecYEG preprotein conducting channel. Has a central role in coupling the hydrolysis of ATP to the transfer of proteins into and across the cell membrane, serving both as a receptor for the preprotein-SecB complex and as an ATP-driven molecular motor driving the stepwise translocation of polypeptide chains across the membrane. The protein is Protein translocase subunit SecA of Pseudomonas putida (strain W619).